A 163-amino-acid polypeptide reads, in one-letter code: Nucleotide-binding protein Asuc_2113 (163 aa).

This sequence belongs to the YajQ family.

In terms of biological role, nucleotide-binding protein. The protein is Nucleotide-binding protein Asuc_2113 of Actinobacillus succinogenes (strain ATCC 55618 / DSM 22257 / CCUG 43843 / 130Z).